We begin with the raw amino-acid sequence, 737 residues long: Translation initiation factor IF-2 (737 aa).

Over residues 69 to 80 (EKKEEKPIRKIM) the composition is skewed to basic and acidic residues. The disordered stretch occupies residues 69 to 130 (EKKEEKPIRK…HKNKGKKKKG (62 aa)). Composition is skewed to basic residues over residues 95–108 (NNKK…KNKK) and 121–130 (HKNKGKKKKG). The 168-residue stretch at 237-404 (ERPPVITIMG…TILITAEILE (168 aa)) folds into the tr-type G domain. A G1 region spans residues 246–253 (GHVDHGKT). Residue 246–253 (GHVDHGKT) participates in GTP binding. The tract at residues 271 to 275 (GITQK) is G2. Positions 292–295 (DTPG) are G3. GTP-binding positions include 292–296 (DTPGH) and 346–349 (NKID). The segment at 346–349 (NKID) is G4. Positions 382–384 (SAK) are G5.

Belongs to the TRAFAC class translation factor GTPase superfamily. Classic translation factor GTPase family. IF-2 subfamily.

The protein resides in the cytoplasm. Its function is as follows. One of the essential components for the initiation of protein synthesis. Protects formylmethionyl-tRNA from spontaneous hydrolysis and promotes its binding to the 30S ribosomal subunits. Also involved in the hydrolysis of GTP during the formation of the 70S ribosomal complex. This is Translation initiation factor IF-2 from Fusobacterium nucleatum subsp. nucleatum (strain ATCC 25586 / DSM 15643 / BCRC 10681 / CIP 101130 / JCM 8532 / KCTC 2640 / LMG 13131 / VPI 4355).